Here is a 350-residue protein sequence, read N- to C-terminus: Kievitone hydratase (350 aa).

A signal peptide spans 1–19 (MMISSVLVAGVVAVSAALA).

In terms of assembly, homodimer. Post-translationally, glycosylated.

It is found in the secreted. The catalysed reaction is kievitone hydrate = kievitone + H2O. Its function is as follows. Converts fungitoxic kievitone to the less toxic kievitone hydrate, and thereby protects the pathogenic fungus against this phytoalexin. This Fusarium solani subsp. phaseoli (Nectria haematococca) protein is Kievitone hydratase (khs).